Reading from the N-terminus, the 288-residue chain is Acetyl-coenzyme A carboxylase carboxyl transferase subunit beta (288 aa).

Positions 34 to 288 (LFAKCPGCKQ…TLLSFHGGVQ (255 aa)) constitute a CoA carboxyltransferase N-terminal domain. The Zn(2+) site is built by Cys38, Cys41, Cys56, and Cys59. A C4-type zinc finger spans residues 38–59 (CPGCKQAIYQKDLGQAKICPNC).

This sequence belongs to the AccD/PCCB family. Acetyl-CoA carboxylase is a heterohexamer composed of biotin carboxyl carrier protein (AccB), biotin carboxylase (AccC) and two subunits each of ACCase subunit alpha (AccA) and ACCase subunit beta (AccD). Zn(2+) serves as cofactor.

The protein localises to the cytoplasm. The enzyme catalyses N(6)-carboxybiotinyl-L-lysyl-[protein] + acetyl-CoA = N(6)-biotinyl-L-lysyl-[protein] + malonyl-CoA. It functions in the pathway lipid metabolism; malonyl-CoA biosynthesis; malonyl-CoA from acetyl-CoA: step 1/1. Functionally, component of the acetyl coenzyme A carboxylase (ACC) complex. Biotin carboxylase (BC) catalyzes the carboxylation of biotin on its carrier protein (BCCP) and then the CO(2) group is transferred by the transcarboxylase to acetyl-CoA to form malonyl-CoA. The sequence is that of Acetyl-coenzyme A carboxylase carboxyl transferase subunit beta from Streptococcus thermophilus (strain CNRZ 1066).